The primary structure comprises 699 residues: Chitinase A1 (699 aa).

The signal sequence occupies residues 1 to 41 (MINLNKHTAFKKTAKFFLGLSLLLSVIVPSFALQPATAEAA). The region spanning 44-454 (YKIVGYYPSW…NKLKADLPTG (411 aa)) is the GH18 domain. Chitin contacts are provided by residues 135–136 (DQ) and 162–165 (GGWT). Glu-204 acts as the Proton donor in catalysis. Chitin is bound by residues Tyr-205, 277 to 280 (MTYD), and Trp-433. The segment at 449 to 471 (ADLPTGGTVPPVDTTAPSVPGNA) is disordered. The segment covering 452 to 465 (PTGGTVPPVDTTAP) has biased composition (low complexity). Fibronectin type-III domains are found at residues 467 to 553 (VPGN…TAQP) and 562 to 647 (APTN…TAAE).

This sequence belongs to the glycosyl hydrolase 18 family. Chitinase class II subfamily.

The catalysed reaction is Random endo-hydrolysis of N-acetyl-beta-D-glucosaminide (1-&gt;4)-beta-linkages in chitin and chitodextrins.. The polypeptide is Chitinase A1 (chiA1) (Niallia circulans (Bacillus circulans)).